Here is a 126-residue protein sequence, read N- to C-terminus: Holo-[acyl-carrier-protein] synthase (126 aa).

The Mg(2+) site is built by aspartate 9 and glutamate 58.

Belongs to the P-Pant transferase superfamily. AcpS family. Mg(2+) serves as cofactor.

The protein localises to the cytoplasm. It catalyses the reaction apo-[ACP] + CoA = holo-[ACP] + adenosine 3',5'-bisphosphate + H(+). In terms of biological role, transfers the 4'-phosphopantetheine moiety from coenzyme A to a Ser of acyl-carrier-protein. This is Holo-[acyl-carrier-protein] synthase from Shewanella denitrificans (strain OS217 / ATCC BAA-1090 / DSM 15013).